A 374-amino-acid chain; its full sequence is Erythronate-4-phosphate dehydrogenase (374 aa).

Positions 45 and 67 each coordinate substrate. Aspartate 147 contributes to the NAD(+) binding site. The active site involves arginine 208. NAD(+) is bound at residue aspartate 232. Glutamate 237 is a catalytic residue. Histidine 254 serves as the catalytic Proton donor. Glycine 257 serves as a coordination point for NAD(+).

Belongs to the D-isomer specific 2-hydroxyacid dehydrogenase family. PdxB subfamily. Homodimer.

It is found in the cytoplasm. The catalysed reaction is 4-phospho-D-erythronate + NAD(+) = (R)-3-hydroxy-2-oxo-4-phosphooxybutanoate + NADH + H(+). It functions in the pathway cofactor biosynthesis; pyridoxine 5'-phosphate biosynthesis; pyridoxine 5'-phosphate from D-erythrose 4-phosphate: step 2/5. Catalyzes the oxidation of erythronate-4-phosphate to 3-hydroxy-2-oxo-4-phosphonooxybutanoate. The protein is Erythronate-4-phosphate dehydrogenase of Pseudoalteromonas atlantica (strain T6c / ATCC BAA-1087).